Reading from the N-terminus, the 267-residue chain is MADS-box transcription factor 15 (267 aa).

In terms of domain architecture, MADS-box spans Met1–Ser61. Positions Glu88–Asn178 constitute a K-box domain. Residues Val179–Asp215 are disordered. Residues Gln182–Asp215 are compositionally biased toward low complexity.

As to quaternary structure, may interact with the K-box of MADS1 and MADS6.

It localises to the nucleus. Its function is as follows. Probable transcription factor. The sequence is that of MADS-box transcription factor 15 (MADS15) from Oryza sativa subsp. japonica (Rice).